A 233-amino-acid polypeptide reads, in one-letter code: uncharacterized protein (233 aa).

The interval 21–43 is disordered; sequence RWRTATSADHPRRGRPAAQAVRR.

This is an uncharacterized protein from Mycobacterium tuberculosis (strain CDC 1551 / Oshkosh).